The chain runs to 320 residues: Acetyl-coenzyme A carboxylase carboxyl transferase subunit alpha (320 aa).

Residues 41–295 enclose the CoA carboxyltransferase C-terminal domain; sequence KIEEKAQQAL…GDAIAAAFAE (255 aa).

This sequence belongs to the AccA family. In terms of assembly, acetyl-CoA carboxylase is a heterohexamer composed of biotin carboxyl carrier protein (AccB), biotin carboxylase (AccC) and two subunits each of ACCase subunit alpha (AccA) and ACCase subunit beta (AccD).

The protein resides in the cytoplasm. It catalyses the reaction N(6)-carboxybiotinyl-L-lysyl-[protein] + acetyl-CoA = N(6)-biotinyl-L-lysyl-[protein] + malonyl-CoA. The protein operates within lipid metabolism; malonyl-CoA biosynthesis; malonyl-CoA from acetyl-CoA: step 1/1. Its function is as follows. Component of the acetyl coenzyme A carboxylase (ACC) complex. First, biotin carboxylase catalyzes the carboxylation of biotin on its carrier protein (BCCP) and then the CO(2) group is transferred by the carboxyltransferase to acetyl-CoA to form malonyl-CoA. In Rhodopseudomonas palustris (strain ATCC BAA-98 / CGA009), this protein is Acetyl-coenzyme A carboxylase carboxyl transferase subunit alpha.